Here is a 314-residue protein sequence, read N- to C-terminus: MKRAPTKQPAKPAARGGERAQGRVIAAHGRHYIVAPADGGPMLQCFPRGKKSEVAVGDRVAYERTSADQGVIVEIGERRNLLYRSDQFKSKLFAANLDQLLIVLATEPYFSEDLLGRALIAAEANELKPIVVLNKIDVEAALPVARERLAPYRALGYDVLELSVKGAPDDARAQLAPRLAGHSTILLGQSGMGKSTLVNLLVPDAEAATREISAALNSGRHTTTFTRLYPLQDGGALIDSPGFQEFGLYHLTEGRLERAFPEFRPLLAHCRFYNCHHLHEPGCAILEALADGRIAPTRHALYAQLVHEASQIVR.

The interval M1–Q21 is disordered. One can recognise a CP-type G domain in the interval S85–F246. GTP is bound by residues N134–D137 and G188–T196. C270, C275, H277, and C283 together coordinate Zn(2+).

The protein belongs to the TRAFAC class YlqF/YawG GTPase family. RsgA subfamily. As to quaternary structure, monomer. Associates with 30S ribosomal subunit, binds 16S rRNA. It depends on Zn(2+) as a cofactor.

Its subcellular location is the cytoplasm. One of several proteins that assist in the late maturation steps of the functional core of the 30S ribosomal subunit. Helps release RbfA from mature subunits. May play a role in the assembly of ribosomal proteins into the subunit. Circularly permuted GTPase that catalyzes slow GTP hydrolysis, GTPase activity is stimulated by the 30S ribosomal subunit. This Burkholderia pseudomallei (strain 1106a) protein is Small ribosomal subunit biogenesis GTPase RsgA.